We begin with the raw amino-acid sequence, 211 residues long: Thiamine-phosphate synthase (211 aa).

4-amino-2-methyl-5-(diphosphooxymethyl)pyrimidine is bound by residues 37–41 and Asn-69; that span reads QLRIK. 2 residues coordinate Mg(2+): Asp-70 and Asp-89. Position 108 (Ser-108) interacts with 4-amino-2-methyl-5-(diphosphooxymethyl)pyrimidine. Residue 134 to 136 coordinates 2-[(2R,5Z)-2-carboxy-4-methylthiazol-5(2H)-ylidene]ethyl phosphate; it reads TQT. 4-amino-2-methyl-5-(diphosphooxymethyl)pyrimidine is bound at residue Lys-137. Residues Gly-166 and 186–187 each bind 2-[(2R,5Z)-2-carboxy-4-methylthiazol-5(2H)-ylidene]ethyl phosphate; that span reads VS.

The protein belongs to the thiamine-phosphate synthase family. Mg(2+) serves as cofactor.

The enzyme catalyses 2-[(2R,5Z)-2-carboxy-4-methylthiazol-5(2H)-ylidene]ethyl phosphate + 4-amino-2-methyl-5-(diphosphooxymethyl)pyrimidine + 2 H(+) = thiamine phosphate + CO2 + diphosphate. It catalyses the reaction 2-(2-carboxy-4-methylthiazol-5-yl)ethyl phosphate + 4-amino-2-methyl-5-(diphosphooxymethyl)pyrimidine + 2 H(+) = thiamine phosphate + CO2 + diphosphate. It carries out the reaction 4-methyl-5-(2-phosphooxyethyl)-thiazole + 4-amino-2-methyl-5-(diphosphooxymethyl)pyrimidine + H(+) = thiamine phosphate + diphosphate. Its pathway is cofactor biosynthesis; thiamine diphosphate biosynthesis; thiamine phosphate from 4-amino-2-methyl-5-diphosphomethylpyrimidine and 4-methyl-5-(2-phosphoethyl)-thiazole: step 1/1. Condenses 4-methyl-5-(beta-hydroxyethyl)thiazole monophosphate (THZ-P) and 2-methyl-4-amino-5-hydroxymethyl pyrimidine pyrophosphate (HMP-PP) to form thiamine monophosphate (TMP). This chain is Thiamine-phosphate synthase, found in Escherichia coli (strain SE11).